We begin with the raw amino-acid sequence, 222 residues long: Sigma non-opioid intracellular receptor 1 (222 aa).

Topologically, residues methionine 1–tryptophan 7 are lumenal. Residues valine 8–leucine 29 traverse the membrane as a helical segment. The Cytoplasmic segment spans residues alanine 30–cysteine 222. The segment at serine 98–leucine 105 is important for ligand-binding. The C-terminal hydrophobic region stretch occupies residues phenylalanine 176–cysteine 222.

The protein belongs to the ERG2 family. As to quaternary structure, homotrimer.

Its subcellular location is the nucleus inner membrane. The protein resides in the nucleus outer membrane. It is found in the nucleus envelope. It localises to the cytoplasmic vesicle. The protein localises to the endoplasmic reticulum membrane. Its subcellular location is the membrane. Its function is as follows. May function in lipid transport from the endoplasmic reticulum and be involved in a wide array of cellular functions probably through regulation of the biogenesis of lipid microdomains at the plasma membrane. May regulate calcium efflux at the endoplasmic reticulum. The polypeptide is Sigma non-opioid intracellular receptor 1 (SIGMAR1) (Gallus gallus (Chicken)).